Reading from the N-terminus, the 977-residue chain is uncharacterized protein (977 aa).

Residues 1–24 (MMQQRSGSLSLLSNAVQAGQSSDP) show a composition bias toward polar residues. A disordered region spans residues 1 to 65 (MMQQRSGSLS…HEKTKAGKDR (65 aa)). Positions 72–99 (CQSCRKKKVKCSGERPSCDQCLKHNIPC) form a DNA-binding region, zn(2)-C6 fungal-type. Residues 176 to 195 (LSHPTIVPSSNSSSLLNSTN) form a disordered region. Over residues 177–195 (SHPTIVPSSNSSSLLNSTN) the composition is skewed to low complexity. At Ser220 the chain carries Phosphoserine. Disordered regions lie at residues 287-307 (TDSL…DSNR), 357-380 (NSAS…NNSL), and 751-774 (HTPI…ANGA). Low complexity predominate over residues 364-379 (STSYTNNNDTTSDNNS). Polar residues predominate over residues 751–770 (HTPINVTNGESQNNSNNDPS).

Its subcellular location is the cytoplasm. It localises to the nucleus. This is an uncharacterized protein from Schizosaccharomyces pombe (strain 972 / ATCC 24843) (Fission yeast).